The following is a 261-amino-acid chain: MIRVDGRAPAQMRPVYITRHYNKYAEGSALIEVGDTRVICTASIDNRVPTFLKGAGKGWVTAEFGMLPRATGVRGIRESVKGHPGGRSLEIQRLIGRSLRAVVDLPALGERTVILDCDVIQADGGTRTAAITGGFVALVDAMQTLVTEGVTPRLPVLDYVAATSVGLFEGEAVLDLCFAEDSAAEVDFNVVMTGTGRFVEVQGTGEGTTFERADVDRLLDLAVVGIRSLVEQQRAVLGSLAEEIGKRRGNQNGAAGTGDQK.

Residues R87 and 125–127 (GTR) contribute to the phosphate site.

Belongs to the RNase PH family. Homohexameric ring arranged as a trimer of dimers.

The enzyme catalyses tRNA(n+1) + phosphate = tRNA(n) + a ribonucleoside 5'-diphosphate. In terms of biological role, phosphorolytic 3'-5' exoribonuclease that plays an important role in tRNA 3'-end maturation. Removes nucleotide residues following the 3'-CCA terminus of tRNAs; can also add nucleotides to the ends of RNA molecules by using nucleoside diphosphates as substrates, but this may not be physiologically important. Probably plays a role in initiation of 16S rRNA degradation (leading to ribosome degradation) during starvation. The chain is Ribonuclease PH from Desulforudis audaxviator (strain MP104C).